Here is a 427-residue protein sequence, read N- to C-terminus: Tumor necrosis factor receptor superfamily member 16 (427 aa).

An N-terminal signal peptide occupies residues 1–28; the sequence is MGAGATGRAMDGPRLLLLLLLGVSLGGA. Residues 29–250 are Extracellular-facing; that stretch reads KEACPTGLYT…PVVTRGTTDN (222 aa). 4 TNFR-Cys repeats span residues 31 to 64, 66 to 107, 108 to 146, and 148 to 188; these read ACPT…QTVC, PCLD…DAVC, RCAY…NTVC, and ECPD…DAEC. 12 disulfides stabilise this stretch: C32/C43, C44/C57, C47/C64, C67/C83, C86/C99, C89/C107, C109/C122, C125/C138, C128/C146, C149/C164, C167/C180, and C170/C188. An N-linked (GlcNAc...) asparagine glycan is attached at N60. Residues 194 to 219 form a disordered region; sequence RWITRSTPPEGSDSTAPSTQEPEAPP. A compositionally biased stretch (polar residues) spans 197–214; it reads TRSTPPEGSDSTAPSTQE. The chain crosses the membrane as a helical span at residues 251 to 272; the sequence is LIPVYCSILAAVVVGLVAYIAF. Topologically, residues 273 to 427 are cytoplasmic; the sequence is KRWNSCKQNK…CSESTATSPV (155 aa). 2 stretches are compositionally biased toward polar residues: residues 281 to 291 and 305 to 326; these read NKQGANSRPVN and SGIS…TASG. A disordered region spans residues 281–338; the sequence is NKQGANSRPVNQTPPPEGEKLHSDSGISVDSQSLHDQQPHTQTASGQALKGDGGLYSS. Residue S311 is modified to Phosphoserine. The segment at 326–341 is mediates interaction with KIDINS220; sequence GQALKGDGGLYSSLPP. Positions 344-421 constitute a Death domain; it reads REEVEKLLNG…DLVESLCSES (78 aa).

In terms of assembly, homodimer; disulfide-linked. Heterodimer with SORCS2. The extracellular domains of the heterodimer bind NGF. The cytoplasmic region of the heterodimer binds TRIO. NGF binding mediates dissociation of TRIO from the receptor complex. Interacts with RTN4R. Interacts with TRAF2, TRAF4, TRAF6, PTPN13 and RANBP9. Interacts through TRAF6 with SQSTM1 which bridges NGFR to NTRK1. Interacts with BEX1. Interacts with BEX3. Interacts with KIDINS220 and NTRK1. Can form a ternary complex with NTRK1 and KIDINS220 and this complex is affected by the expression levels of KIDINS220. An increase in KIDINS220 expression leads to a decreased association of NGFR and NTRK1. Interacts with NTRK2; may regulate the ligand specificity of the NTRK2 receptor. Interacts (via death domain) with RAB31. Interacts with LINGO1. Interacts with NRADD. Interacts with MAGED1; the interaction antagonizes the association NGFR:NTRK1. Interacts (via death domain) with ARHGDIA and RIPK2. Interacts with BFAR. N- and O-glycosylated. In terms of processing, O-linked glycans consist of Gal(1-3)GalNAc core elongated by 1 or 2 NeuNAc. Post-translationally, phosphorylated on serine residues.

It is found in the cell membrane. It localises to the cytoplasm. The protein resides in the perikaryon. Its subcellular location is the cell projection. The protein localises to the growth cone. It is found in the dendritic spine. Its function is as follows. Low affinity receptor which can bind to NGF, BDNF, NTF3, and NTF4. Forms a heterodimeric receptor with SORCS2 that binds the precursor forms of NGF, BDNF and NTF3 with high affinity, and has much lower affinity for mature NGF and BDNF. Plays an important role in differentiation and survival of specific neuronal populations during development. Can mediate cell survival as well as cell death of neural cells. Plays a role in the inactivation of RHOA. Plays a role in the regulation of the translocation of GLUT4 to the cell surface in adipocytes and skeletal muscle cells in response to insulin, probably by regulating RAB31 activity, and thereby contributes to the regulation of insulin-dependent glucose uptake. Necessary for the circadian oscillation of the clock genes BMAL1, PER1, PER2 and NR1D1 in the suprachiasmatic nucleus (SCmgetaN) of the brain and in liver and of the genes involved in glucose and lipid metabolism in the liver. Together with BFAR negatively regulates NF-kappa-B and JNK-related signaling pathways. The chain is Tumor necrosis factor receptor superfamily member 16 (NGFR) from Homo sapiens (Human).